Here is a 1012-residue protein sequence, read N- to C-terminus: Putative cellulose synthase-like protein D5 (1012 aa).

Positions 1 to 85 are disordered; sequence MSGDYANYTV…APSSNKSLLV (85 aa). Positions 20-37 are enriched in low complexity; the sequence is PSGGAPPAAPSAGGARPG. Residues 57-69 are compositionally biased toward basic and acidic residues; the sequence is GGGDDGAKMDRRL. Helical transmembrane passes span 150 to 170 and 180 to 200; these read ILSP…LFLV and ALWL…SWLL. Asp-280 is an active-site residue. A disordered region spans residues 597–620; it reads PRQGSEAMPGAGGGRSGGGSVGGD. Positions 606 to 618 are enriched in gly residues; it reads GAGGGRSGGGSVG. Residue Asp-717 is part of the active site. Helical transmembrane passes span 799-819, 825-845, 871-891, 914-934, 948-968, and 978-998; these read LFLI…QFIV, TFLS…LLEV, LAAV…SFTL, SLFI…VVGV, LLGG…FAKG, and TIVY…WITI.

The protein belongs to the glycosyltransferase 2 family. Plant cellulose synthase-like D subfamily.

The protein resides in the golgi apparatus membrane. In terms of biological role, thought to be a Golgi-localized beta-glycan synthase that polymerize the backbones of noncellulosic polysaccharides (hemicelluloses) of plant cell wall. In Oryza sativa subsp. indica (Rice), this protein is Putative cellulose synthase-like protein D5 (CSLD5).